We begin with the raw amino-acid sequence, 130 residues long: Small ribosomal subunit protein uS11 (130 aa).

Positions 109–130 are disordered; it reads EDITPIPHDGTGRPGGKRGRRV.

This sequence belongs to the universal ribosomal protein uS11 family. As to quaternary structure, part of the 30S ribosomal subunit.

Functionally, located on the platform of the 30S subunit. This chain is Small ribosomal subunit protein uS11, found in Methanobrevibacter smithii (strain ATCC 35061 / DSM 861 / OCM 144 / PS).